A 616-amino-acid chain; its full sequence is Dihydroxy-acid dehydratase (616 aa).

Asp-81 contributes to the Mg(2+) binding site. Residue Cys-122 coordinates [2Fe-2S] cluster. Positions 123 and 124 each coordinate Mg(2+). Lys-124 bears the N6-carboxylysine mark. Cys-195 contributes to the [2Fe-2S] cluster binding site. Glu-491 contributes to the Mg(2+) binding site. The active-site Proton acceptor is Ser-517.

This sequence belongs to the IlvD/Edd family. As to quaternary structure, homodimer. [2Fe-2S] cluster is required as a cofactor. It depends on Mg(2+) as a cofactor.

The enzyme catalyses (2R)-2,3-dihydroxy-3-methylbutanoate = 3-methyl-2-oxobutanoate + H2O. It catalyses the reaction (2R,3R)-2,3-dihydroxy-3-methylpentanoate = (S)-3-methyl-2-oxopentanoate + H2O. It participates in amino-acid biosynthesis; L-isoleucine biosynthesis; L-isoleucine from 2-oxobutanoate: step 3/4. The protein operates within amino-acid biosynthesis; L-valine biosynthesis; L-valine from pyruvate: step 3/4. In terms of biological role, functions in the biosynthesis of branched-chain amino acids. Catalyzes the dehydration of (2R,3R)-2,3-dihydroxy-3-methylpentanoate (2,3-dihydroxy-3-methylvalerate) into 2-oxo-3-methylpentanoate (2-oxo-3-methylvalerate) and of (2R)-2,3-dihydroxy-3-methylbutanoate (2,3-dihydroxyisovalerate) into 2-oxo-3-methylbutanoate (2-oxoisovalerate), the penultimate precursor to L-isoleucine and L-valine, respectively. The chain is Dihydroxy-acid dehydratase from Escherichia coli O81 (strain ED1a).